A 219-amino-acid polypeptide reads, in one-letter code: Ribosome maturation factor RimP (219 aa).

Residues 195 to 219 (EGRIPGDDLGAEPEDVASTETQEKK) are disordered.

The protein belongs to the RimP family.

The protein localises to the cytoplasm. Functionally, required for maturation of 30S ribosomal subunits. The protein is Ribosome maturation factor RimP of Brucella abortus (strain S19).